The chain runs to 67 residues: Conotoxin AbVIO (67 aa).

The first 17 residues, V1–T17, serve as a signal peptide directing secretion. Positions A18–S40 are excised as a propeptide. Intrachain disulfides connect C43-C57, C50-C61, and C56-C66.

This sequence belongs to the conotoxin O1 superfamily. Expressed by the venom duct.

It localises to the secreted. The chain is Conotoxin AbVIO from Conus abbreviatus (Abbreviated cone).